The sequence spans 135 residues: Probable transporter PD_1892 (135 aa).

4 helical membrane passes run 4–24 (YWYP…LLLL), 45–65 (AQNI…TVIF), 71–91 (VTVA…GLGT), and 114–134 (IVAT…MGVY).

It belongs to the TsuA/YedE (TC 9.B.102) family.

It localises to the cell inner membrane. The protein is Probable transporter PD_1892 of Xylella fastidiosa (strain Temecula1 / ATCC 700964).